Reading from the N-terminus, the 346-residue chain is Phosphate acyltransferase (346 aa).

Belongs to the PlsX family. As to quaternary structure, homodimer. Probably interacts with PlsY.

Its subcellular location is the cytoplasm. It carries out the reaction a fatty acyl-[ACP] + phosphate = an acyl phosphate + holo-[ACP]. It functions in the pathway lipid metabolism; phospholipid metabolism. Its function is as follows. Catalyzes the reversible formation of acyl-phosphate (acyl-PO(4)) from acyl-[acyl-carrier-protein] (acyl-ACP). This enzyme utilizes acyl-ACP as fatty acyl donor, but not acyl-CoA. The sequence is that of Phosphate acyltransferase from Brucella melitensis biotype 2 (strain ATCC 23457).